The following is a 347-amino-acid chain: Olfactory receptor 1L6 (347 aa).

At methionine 1–lysine 62 the chain is on the extracellular side. N-linked (GlcNAc...) asparagine glycosylation occurs at asparagine 41. Residues proline 63 to isoleucine 86 traverse the membrane as a helical segment. Residues tyrosine 87–threonine 94 are Cytoplasmic-facing. Residues proline 95–proline 116 traverse the membrane as a helical segment. At lysine 117 to glutamine 137 the chain is on the extracellular side. A disulfide bond links cysteine 134 and cysteine 226. The chain crosses the membrane as a helical span at residues methionine 138–isoleucine 157. The Cytoplasmic portion of the chain corresponds to aspartate 158 to arginine 176. Residues histidine 177–phenylalanine 195 traverse the membrane as a helical segment. Topologically, residues arginine 196–glutamine 233 are extracellular. The chain crosses the membrane as a helical span at residues methionine 234 to leucine 256. At arginine 257–lysine 273 the chain is on the cytoplasmic side. The helical transmembrane segment at alanine 274–tyrosine 296 threads the bilayer. Residues phenylalanine 297–arginine 309 lie on the Extracellular side of the membrane. A helical membrane pass occupies residues valine 310 to leucine 329. Residues arginine 330–arginine 347 are Cytoplasmic-facing.

Belongs to the G-protein coupled receptor 1 family.

The protein resides in the cell membrane. Its function is as follows. Odorant receptor. The chain is Olfactory receptor 1L6 (OR1L6) from Homo sapiens (Human).